Reading from the N-terminus, the 253-residue chain is 5'/3'-nucleotidase SurE (253 aa).

A divalent metal cation is bound by residues Asp8, Asp9, Ser39, and Asn92.

This sequence belongs to the SurE nucleotidase family. It depends on a divalent metal cation as a cofactor.

The protein localises to the cytoplasm. The enzyme catalyses a ribonucleoside 5'-phosphate + H2O = a ribonucleoside + phosphate. The catalysed reaction is a ribonucleoside 3'-phosphate + H2O = a ribonucleoside + phosphate. It carries out the reaction [phosphate](n) + H2O = [phosphate](n-1) + phosphate + H(+). Its function is as follows. Nucleotidase with a broad substrate specificity as it can dephosphorylate various ribo- and deoxyribonucleoside 5'-monophosphates and ribonucleoside 3'-monophosphates with highest affinity to 3'-AMP. Also hydrolyzes polyphosphate (exopolyphosphatase activity) with the preference for short-chain-length substrates (P20-25). Might be involved in the regulation of dNTP and NTP pools, and in the turnover of 3'-mononucleotides produced by numerous intracellular RNases (T1, T2, and F) during the degradation of various RNAs. The polypeptide is 5'/3'-nucleotidase SurE (Shigella boydii serotype 18 (strain CDC 3083-94 / BS512)).